The chain runs to 370 residues: MITAYILFTVTVGVTNSIVFYLDDHIGTRHFKKRVYCSSAWIVAWRLMEMVIFALSVYLYSRWTSKRITGPLEKITDAIQKMREGEFAQRLCFKADYELTLIQEHFNEMVAHLEKTEAEKNKLEQSKQRMLLDLSHDFKTPITTIQGYAMALQMGVVDSPEKQRRYLEMIYNKSIIVTALVEDMFQLATLDSPDLPSAEEHGRFGRTGSEIAIAYFDQFEQNKFSLDLKIPTQRVMIRMNRNLLYRALSNLLSNTLKHNPKGTKVALSLTDTHEAILLEVMDNGIGIAEELKESIFQPFVRGDKARTGEGTGLGLPSPKKRLNFMVESCCSRVNQGKQYSRSFSQRLENDLPYRLPYHRMNKFHRNANQQ.

2 consecutive transmembrane segments (helical) span residues 2–22 (ITAYILFTVTVGVTNSIVFYL) and 40–60 (AWIVAWRLMEMVIFALSVYLY). The 53-residue stretch at 66–118 (KRITGPLEKITDAIQKMREGEFAQRLCFKADYELTLIQEHFNEMVAHLEKTEA) folds into the HAMP domain. The Histidine kinase domain occupies 133–355 (DLSHDFKTPI…RLENDLPYRL (223 aa)).

The protein localises to the cell membrane. It carries out the reaction ATP + protein L-histidine = ADP + protein N-phospho-L-histidine.. Functionally, member of the two-component regulatory system GtcS/GtcR which may act in the control of the transcription of the grs operon which encodes the multienzymes involved in the biosynthesis of the peptide antibiotic gramicidin S. Probably activates GtcR by phosphorylation. This chain is Sensor protein GtcS (gtcS), found in Aneurinibacillus migulanus (Bacillus migulanus).